We begin with the raw amino-acid sequence, 1436 residues long: Antigen WC1.1 (1436 aa).

An N-terminal signal peptide occupies residues 1-25 (MALGRHLSLRGLCVLLLGTMVGGQA). 3 consecutive SRCR domains span residues 28–131 (LRLK…VVCS), 134–234 (VRLA…VVCS), and 239–340 (VRLM…VICS). 2 cysteine pairs are disulfide-bonded: C66-C130 and C97-C107. N-linked (GlcNAc...) asparagine glycosylation occurs at N162. 2 disulfide bridges follow: C172/C233 and C203/C213. Residues N244 and N256 are each glycosylated (N-linked (GlcNAc...) asparagine). Disulfide bonds link C265–C329, C278–C339, and C309–C319. N351, N424, and N444 each carry an N-linked (GlcNAc...) asparagine glycan. 5 consecutive SRCR domains span residues 376–476 (LRLV…VICS), 481–581 (LRMV…IWCA), 586–686 (IRLV…VICS), 689–789 (VRLA…VVCS), and 794–895 (VQLM…VICS). 3 disulfides stabilise this stretch: C401–C465, C414–C475, and C445–C455. N499 and N531 each carry an N-linked (GlcNAc...) asparagine glycan. 6 cysteine pairs are disulfide-bonded: C506–C570, C519–C580, C550–C560, C611–C675, C624–C685, and C655–C665. N717 carries N-linked (GlcNAc...) asparagine glycosylation. Intrachain disulfides connect C727/C788 and C758/C768. N799 is a glycosylation site (N-linked (GlcNAc...) asparagine). Disulfide bonds link C820–C884, C833–C894, and C864–C874. N897, N979, and N999 each carry an N-linked (GlcNAc...) asparagine glycan. SRCR domains are found at residues 931 to 1031 (LRLV…VICS), 1036 to 1136 (LRMV…ISCE), and 1155 to 1255 (LRLR…VRCS). Disulfide bonds link C956/C1020, C969/C1030, and C1000/C1010. N1054 and N1086 each carry an N-linked (GlcNAc...) asparagine glycan. 3 disulfides stabilise this stretch: C1061/C1125, C1074/C1135, and C1105/C1115. N-linked (GlcNAc...) asparagine glycosylation is found at N1173 and N1214. Cystine bridges form between C1180–C1244, C1193–C1254, and C1224–C1234. The segment at 1337 to 1410 (EGLGSPDQMT…PGEGEESFWL (74 aa)) is disordered. Residues 1348–1358 (VPDENYDDAEE) are compositionally biased toward acidic residues. Residues 1384-1393 (RSSQTGSFLN) are compositionally biased toward polar residues. The N-linked (GlcNAc...) asparagine glycan is linked to N1393.

In terms of tissue distribution, expressed on subsets of CD4-CD8- gamma delta T lymphocytes.

The protein localises to the secreted. This chain is Antigen WC1.1, found in Bos taurus (Bovine).